The chain runs to 290 residues: Ribosomal protein L11 methyltransferase (290 aa).

Positions 136, 157, 179, and 222 each coordinate S-adenosyl-L-methionine.

Belongs to the methyltransferase superfamily. PrmA family.

The protein resides in the cytoplasm. It catalyses the reaction L-lysyl-[protein] + 3 S-adenosyl-L-methionine = N(6),N(6),N(6)-trimethyl-L-lysyl-[protein] + 3 S-adenosyl-L-homocysteine + 3 H(+). In terms of biological role, methylates ribosomal protein L11. The protein is Ribosomal protein L11 methyltransferase of Porphyromonas gingivalis (strain ATCC BAA-308 / W83).